A 607-amino-acid chain; its full sequence is Matrix metalloproteinase-16 (607 aa).

The N-terminal stretch at 1-31 (MILLAFSSGRRLDFVHRSGVFFLQTLLWILC) is a signal peptide. A propeptide spanning residues 32-119 (ATVCGTEQYF…SSKFNIRRKR (88 aa)) is cleaved from the precursor. N-linked (GlcNAc...) asparagine glycosylation is present at N83. The short motif at 99–106 (PRCGVPDQ) is the Cysteine switch element. Position 101 (C101) interacts with Zn(2+). The Extracellular portion of the chain corresponds to 120-564 (YALTGQKWQH…LDNTASTVKA (445 aa)). D183 contributes to the Ca(2+) binding site. 2 residues coordinate Zn(2+): H193 and D195. Ca(2+) is bound by residues D200, G201, G203, and F205. A Zn(2+)-binding site is contributed by H208. The Ca(2+) site is built by G215, G217, and D219. Position 221 (H221) interacts with Zn(2+). Residues D223 and E226 each coordinate Ca(2+). H246 is a binding site for Zn(2+). E247 is an active-site residue. H250 and H256 together coordinate Zn(2+). The disordered stretch occupies residues 281 to 340 (DDLQGIQKIYGPPDKIPPPTRPLPTVPPHRSVPPADPRRHDRPKPPRPPTGRPSYPGAKP). Over residues 294 to 315 (DKIPPPTRPLPTVPPHRSVPPA) the composition is skewed to pro residues. 4 Hemopexin repeats span residues 340 to 388 (PNIC…WRGL), 389 to 434 (PPSI…GNGI), 436 to 484 (PHGI…KGIP), and 485 to 532 (ESPQ…FMGC). A disulfide bridge links C343 with C532. A helical transmembrane segment spans residues 565-585 (IAIVIPCILALCLLVLVYTVF). Residues 586 to 607 (QFKRKGTPRHILYCKRSMQEWV) lie on the Cytoplasmic side of the membrane.

The protein belongs to the peptidase M10A family. As to quaternary structure, interacts with CSPG4 through CSPG4 chondroitin sulfate glycosaminoglycan. Requires Zn(2+) as cofactor. The cofactor is Ca(2+). In terms of processing, the precursor is cleaved by a furin endopeptidase.

Its subcellular location is the cell membrane. Endopeptidase that degrades various components of the extracellular matrix, such as collagen type III and fibronectin. Activates progelatinase A. Involved in the matrix remodeling of blood vessels. It has no effect on type I, II, IV and V collagen. However, upon interaction with CSPG4, it may be involved in degradation and invasion of type I collagen by melanoma cells. The chain is Matrix metalloproteinase-16 (Mmp16) from Mus musculus (Mouse).